The chain runs to 130 residues: Large ribosomal subunit protein bL12 (130 aa).

This sequence belongs to the bacterial ribosomal protein bL12 family. Homodimer. Part of the ribosomal stalk of the 50S ribosomal subunit. Forms a multimeric L10(L12)X complex, where L10 forms an elongated spine to which 2 to 4 L12 dimers bind in a sequential fashion. Binds GTP-bound translation factors.

Its function is as follows. Forms part of the ribosomal stalk which helps the ribosome interact with GTP-bound translation factors. Is thus essential for accurate translation. The chain is Large ribosomal subunit protein bL12 from Mycolicibacterium vanbaalenii (strain DSM 7251 / JCM 13017 / BCRC 16820 / KCTC 9966 / NRRL B-24157 / PYR-1) (Mycobacterium vanbaalenii).